We begin with the raw amino-acid sequence, 325 residues long: Ribose-phosphate pyrophosphokinase (325 aa).

Residues 45-47 (NGE) and 104-105 (RQ) each bind ATP. Residues H138 and D178 each contribute to the Mg(2+) site. K202 is an active-site residue. Residues R204, D230, and 234–238 (DTGGT) contribute to the D-ribose 5-phosphate site.

This sequence belongs to the ribose-phosphate pyrophosphokinase family. Class I subfamily. Homohexamer. Mg(2+) is required as a cofactor.

It is found in the cytoplasm. It catalyses the reaction D-ribose 5-phosphate + ATP = 5-phospho-alpha-D-ribose 1-diphosphate + AMP + H(+). Its pathway is metabolic intermediate biosynthesis; 5-phospho-alpha-D-ribose 1-diphosphate biosynthesis; 5-phospho-alpha-D-ribose 1-diphosphate from D-ribose 5-phosphate (route I): step 1/1. In terms of biological role, involved in the biosynthesis of the central metabolite phospho-alpha-D-ribosyl-1-pyrophosphate (PRPP) via the transfer of pyrophosphoryl group from ATP to 1-hydroxyl of ribose-5-phosphate (Rib-5-P). This chain is Ribose-phosphate pyrophosphokinase, found in Corynebacterium efficiens (strain DSM 44549 / YS-314 / AJ 12310 / JCM 11189 / NBRC 100395).